A 436-amino-acid chain; its full sequence is GTPase Der (436 aa).

2 consecutive EngA-type G domains span residues 4–167 (PIVA…GEEE) and 176–351 (IRLS…ENHK). GTP-binding positions include 10–17 (GRPNVGKS), 57–61 (DTGGI), 119–122 (NKVD), 182–189 (GRPNVGKS), 229–233 (DTAGM), and 294–297 (NKWD). One can recognise a KH-like domain in the interval 352–436 (KRVQSSTLNE…PIHIIARKRN (85 aa)).

Belongs to the TRAFAC class TrmE-Era-EngA-EngB-Septin-like GTPase superfamily. EngA (Der) GTPase family. Associates with the 50S ribosomal subunit.

Functionally, GTPase that plays an essential role in the late steps of ribosome biogenesis. This is GTPase Der from Staphylococcus aureus (strain Mu3 / ATCC 700698).